Consider the following 185-residue polypeptide: Deoxyuridine 5'-triphosphate nucleotidohydrolase (185 aa).

The disordered stretch occupies residues 1 to 23; that stretch reads MSHLQAHMQRNNKESHSLSPFSQ. Residues 95–97, Asn-108, 112–114, and Lys-122 each bind substrate; these read RSG and TID. The interval 160-185 is disordered; the sequence is DQKDSSQTPSNEGSRGADGFGSTGHD. Residues 175-185 are compositionally biased toward gly residues; it reads GADGFGSTGHD.

It belongs to the dUTPase family. The cofactor is Mg(2+).

The catalysed reaction is dUTP + H2O = dUMP + diphosphate + H(+). Its pathway is pyrimidine metabolism; dUMP biosynthesis; dUMP from dCTP (dUTP route): step 2/2. In terms of biological role, this enzyme is involved in nucleotide metabolism: it produces dUMP, the immediate precursor of thymidine nucleotides and it decreases the intracellular concentration of dUTP so that uracil cannot be incorporated into DNA. This is Deoxyuridine 5'-triphosphate nucleotidohydrolase from Bartonella quintana (strain Toulouse) (Rochalimaea quintana).